The chain runs to 285 residues: Ribosomal RNA small subunit methyltransferase I (285 aa).

This sequence belongs to the methyltransferase superfamily. RsmI family.

The protein localises to the cytoplasm. It catalyses the reaction cytidine(1402) in 16S rRNA + S-adenosyl-L-methionine = 2'-O-methylcytidine(1402) in 16S rRNA + S-adenosyl-L-homocysteine + H(+). Catalyzes the 2'-O-methylation of the ribose of cytidine 1402 (C1402) in 16S rRNA. In Buchnera aphidicola subsp. Schizaphis graminum (strain Sg), this protein is Ribosomal RNA small subunit methyltransferase I.